Here is a 235-residue protein sequence, read N- to C-terminus: UPF0502 protein Bcep18194_B0081 (235 aa).

Belongs to the UPF0502 family.

The chain is UPF0502 protein Bcep18194_B0081 from Burkholderia lata (strain ATCC 17760 / DSM 23089 / LMG 22485 / NCIMB 9086 / R18194 / 383).